The sequence spans 400 residues: Large envelope protein (400 aa).

Methionine 1 is modified (N-acetylmethionine). Disordered stretches follow at residues 1 to 54 and 85 to 116; these read MGGW…HWPE and LTTVPAAPPPASTNRQSGRQPTPISPPLRDSH. Glycine 2 carries the N-myristoyl glycine; by host lipid modification. Residues 2-119 form a pre-S1 region; that stretch reads GGWSSKPRQG…PPLRDSHPQA (118 aa). The segment at 2-174 is pre-S; that stretch reads GGWSSKPRQG…FSRTGDPAPN (173 aa). Topologically, residues 2–181 are virion surface; in external conformation; it reads GGWSSKPRQG…APNMENTTSG (180 aa). Topologically, residues 2-253 are intravirion; in internal conformation; the sequence is GGWSSKPRQG…PGYRWMCLRR (252 aa). N-linked (GlcNAc...) asparagine glycosylation occurs at tryptophan 4. Residues 96–106 are compositionally biased toward polar residues; sequence STNRQSGRQPT. The segment at 120 to 174 is pre-S2; sequence MQWNSTTFHQALLDPRVRGLYFPAGGSSSGTVNPVPTTASPISSIFSRTGDPAPN. A helical membrane pass occupies residues 182 to 202; it reads FLGPLLVLQAGFFLLTRILTI. Residues 203 to 253 lie on the Intravirion; in external conformation side of the membrane; the sequence is PQSLDSWWTSLNFLGGAPTCPGQNSQSPTSNHSPTSCPPICPGYRWMCLRR. The chain crosses the membrane as a helical span at residues 254 to 274; sequence FIIFLFILLLCLIFLLVLLDY. Topologically, residues 275–348 are virion surface; that stretch reads QGMLPVCPLL…WASVRFSWLS (74 aa). Asparagine 320 carries an N-linked (GlcNAc...) asparagine; by host glycan. The chain crosses the membrane as a helical span at residues 349 to 369; that stretch reads LLVPFVQWFAGLSPTVWLSVI. The Intravirion segment spans residues 370–375; sequence WMMWYW. Residues 376 to 398 traverse the membrane as a helical segment; that stretch reads GPSLYNILSPFLPLLPIFFCLWV. Residues 399–400 are Virion surface-facing; the sequence is YI.

It belongs to the orthohepadnavirus major surface antigen family. In terms of assembly, in its internal form (Li-HBsAg), interacts with the capsid protein and with the isoform S. Interacts with host chaperone CANX. Associates with host chaperone CANX through its pre-S2 N glycan; this association may be essential for isoform M proper secretion. As to quaternary structure, interacts with isoform L. Interacts with the antigens of satellite virus HDV (HDVAgs); this interaction is required for encapsidation of HDV genomic RNA. Post-translationally, isoform M is N-terminally acetylated by host at a ratio of 90%, and N-glycosylated by host at the pre-S2 region. Myristoylated.

The protein localises to the virion membrane. Its function is as follows. The large envelope protein exists in two topological conformations, one which is termed 'external' or Le-HBsAg and the other 'internal' or Li-HBsAg. In its external conformation the protein attaches the virus to cell receptors and thereby initiating infection. This interaction determines the species specificity and liver tropism. This attachment induces virion internalization predominantly through caveolin-mediated endocytosis. The large envelope protein also assures fusion between virion membrane and endosomal membrane. In its internal conformation the protein plays a role in virion morphogenesis and mediates the contact with the nucleocapsid like a matrix protein. Functionally, the middle envelope protein plays an important role in the budding of the virion. It is involved in the induction of budding in a nucleocapsid independent way. In this process the majority of envelope proteins bud to form subviral lipoprotein particles of 22 nm of diameter that do not contain a nucleocapsid. The protein is Large envelope protein of Homo sapiens (Human).